Here is a 120-residue protein sequence, read N- to C-terminus: Large ribosomal subunit protein uL22 (120 aa).

A disordered region spans residues 1–25; that stretch reads MFVNKKYTAKGKNLPSSPKKVRPIA.

The protein belongs to the universal ribosomal protein uL22 family. In terms of assembly, part of the 50S ribosomal subunit.

Functionally, this protein binds specifically to 23S rRNA; its binding is stimulated by other ribosomal proteins, e.g. L4, L17, and L20. It is important during the early stages of 50S assembly. It makes multiple contacts with different domains of the 23S rRNA in the assembled 50S subunit and ribosome. Its function is as follows. The globular domain of the protein is located near the polypeptide exit tunnel on the outside of the subunit, while an extended beta-hairpin is found that lines the wall of the exit tunnel in the center of the 70S ribosome. This chain is Large ribosomal subunit protein uL22, found in Borrelia duttonii (strain Ly).